The following is a 109-amino-acid chain: Fluoride-specific ion channel FluC 1 (109 aa).

4 helical membrane passes run 1-21, 29-49, 55-75, and 87-107; these read MVIV…YFFS, LPLG…VFYN, EVYA…STLN, and VFYS…FLGI. Residues Gly-66 and Thr-69 each contribute to the Na(+) site.

Belongs to the fluoride channel Fluc/FEX (TC 1.A.43) family.

The protein localises to the cell membrane. The enzyme catalyses fluoride(in) = fluoride(out). Its activity is regulated as follows. Na(+) is not transported, but it plays an essential structural role and its presence is essential for fluoride channel function. Fluoride-specific ion channel. Important for reducing fluoride concentration in the cell, thus reducing its toxicity. The sequence is that of Fluoride-specific ion channel FluC 1 from Streptococcus pneumoniae (strain ATCC BAA-255 / R6).